We begin with the raw amino-acid sequence, 274 residues long: Large ribosomal subunit protein uL2 (274 aa).

A disordered region spans residues 221 to 274; it reads RGTAMNPVDHPHGGGEGRNFGKHPVTPWGVQTKGKKTRNNKRTDKSIVRRRSKK.

Belongs to the universal ribosomal protein uL2 family. Part of the 50S ribosomal subunit. Forms a bridge to the 30S subunit in the 70S ribosome.

One of the primary rRNA binding proteins. Required for association of the 30S and 50S subunits to form the 70S ribosome, for tRNA binding and peptide bond formation. It has been suggested to have peptidyltransferase activity; this is somewhat controversial. Makes several contacts with the 16S rRNA in the 70S ribosome. In Hamiltonella defensa subsp. Acyrthosiphon pisum (strain 5AT), this protein is Large ribosomal subunit protein uL2.